We begin with the raw amino-acid sequence, 965 residues long: Glycine dehydrogenase (decarboxylating) (965 aa).

At K711 the chain carries N6-(pyridoxal phosphate)lysine.

It belongs to the GcvP family. As to quaternary structure, the glycine cleavage system is composed of four proteins: P, T, L and H. Pyridoxal 5'-phosphate is required as a cofactor.

It catalyses the reaction N(6)-[(R)-lipoyl]-L-lysyl-[glycine-cleavage complex H protein] + glycine + H(+) = N(6)-[(R)-S(8)-aminomethyldihydrolipoyl]-L-lysyl-[glycine-cleavage complex H protein] + CO2. Its function is as follows. The glycine cleavage system catalyzes the degradation of glycine. The P protein binds the alpha-amino group of glycine through its pyridoxal phosphate cofactor; CO(2) is released and the remaining methylamine moiety is then transferred to the lipoamide cofactor of the H protein. This is Glycine dehydrogenase (decarboxylating) from Psychrobacter cryohalolentis (strain ATCC BAA-1226 / DSM 17306 / VKM B-2378 / K5).